The following is a 435-amino-acid chain: Histidine--tRNA ligase (435 aa).

The tract at residues 415 to 435 (SVPLSAFPGDYDRPTFEDFAE) is disordered. The segment covering 424–435 (DYDRPTFEDFAE) has biased composition (basic and acidic residues).

The protein belongs to the class-II aminoacyl-tRNA synthetase family.

It localises to the cytoplasm. The catalysed reaction is tRNA(His) + L-histidine + ATP = L-histidyl-tRNA(His) + AMP + diphosphate + H(+). This is Histidine--tRNA ligase from Haloarcula marismortui (strain ATCC 43049 / DSM 3752 / JCM 8966 / VKM B-1809) (Halobacterium marismortui).